We begin with the raw amino-acid sequence, 935 residues long: Isoleucine--tRNA ligase (935 aa).

The 'HIGH' region signature appears at 58–68; it reads PYANGSIHVGH. E558 provides a ligand contact to L-isoleucyl-5'-AMP. A 'KMSKS' region motif is present at residues 599 to 603; that stretch reads KMSKS. Residue K602 coordinates ATP. Zn(2+) is bound by residues C897, C900, C917, and C920.

Belongs to the class-I aminoacyl-tRNA synthetase family. IleS type 1 subfamily. In terms of assembly, monomer. Requires Zn(2+) as cofactor.

The protein localises to the cytoplasm. The catalysed reaction is tRNA(Ile) + L-isoleucine + ATP = L-isoleucyl-tRNA(Ile) + AMP + diphosphate. In terms of biological role, catalyzes the attachment of isoleucine to tRNA(Ile). As IleRS can inadvertently accommodate and process structurally similar amino acids such as valine, to avoid such errors it has two additional distinct tRNA(Ile)-dependent editing activities. One activity is designated as 'pretransfer' editing and involves the hydrolysis of activated Val-AMP. The other activity is designated 'posttransfer' editing and involves deacylation of mischarged Val-tRNA(Ile). The protein is Isoleucine--tRNA ligase of Francisella tularensis subsp. mediasiatica (strain FSC147).